We begin with the raw amino-acid sequence, 247 residues long: 5'-nucleotidase SurE (247 aa).

4 residues coordinate a divalent metal cation: D8, D9, S39, and N91.

The protein belongs to the SurE nucleotidase family. A divalent metal cation is required as a cofactor.

The protein resides in the cytoplasm. It carries out the reaction a ribonucleoside 5'-phosphate + H2O = a ribonucleoside + phosphate. Its function is as follows. Nucleotidase that shows phosphatase activity on nucleoside 5'-monophosphates. The sequence is that of 5'-nucleotidase SurE from Laribacter hongkongensis (strain HLHK9).